Reading from the N-terminus, the 173-residue chain is Large ribosomal subunit protein uL16 (173 aa).

It belongs to the universal ribosomal protein uL16 family.

This chain is Large ribosomal subunit protein uL16, found in Methanosarcina acetivorans (strain ATCC 35395 / DSM 2834 / JCM 12185 / C2A).